The sequence spans 72 residues: Translation initiation factor IF-1 2 (72 aa).

The region spanning 1–72 (MAKEDTIQMQ…SRARIVFRAK (72 aa)) is the S1-like domain.

This sequence belongs to the IF-1 family. In terms of assembly, component of the 30S ribosomal translation pre-initiation complex which assembles on the 30S ribosome in the order IF-2 and IF-3, IF-1 and N-formylmethionyl-tRNA(fMet); mRNA recruitment can occur at any time during PIC assembly.

It is found in the cytoplasm. Its function is as follows. One of the essential components for the initiation of protein synthesis. Stabilizes the binding of IF-2 and IF-3 on the 30S subunit to which N-formylmethionyl-tRNA(fMet) subsequently binds. Helps modulate mRNA selection, yielding the 30S pre-initiation complex (PIC). Upon addition of the 50S ribosomal subunit IF-1, IF-2 and IF-3 are released leaving the mature 70S translation initiation complex. The chain is Translation initiation factor IF-1 2 from Chromobacterium violaceum (strain ATCC 12472 / DSM 30191 / JCM 1249 / CCUG 213 / NBRC 12614 / NCIMB 9131 / NCTC 9757 / MK).